The sequence spans 1960 residues: Nuclear pore complex protein Nup98-Nup96 (1960 aa).

46 tandem repeats follow at residues 2–3 (FG), 9–10 (FG), 18–19 (FG), 30–31 (FG), 35–36 (FG), 43–44 (FG), 59–60 (FG), 73–74 (FG), 81–82 (FG), 92–93 (FG), 105–106 (FG), 117–118 (FG), 125–126 (FG), 135–136 (FG), 148–149 (FG), 160–161 (FG), 163–164 (FG), 174–175 (FG), 264–265 (FG), 266–267 (FG), 282–283 (FG), 293–294 (FG), 304–305 (FG), 309–310 (FG), 319–320 (FG), 333–334 (FG), 352–353 (FG), 358–359 (FG), 365–366 (FG), 377–378 (FG), 384–385 (FG), 387–388 (FG), 400–401 (FG), 413–414 (FG), 426–427 (FG), 428–429 (FG), 441–442 (FG), 454–455 (FG), 467–468 (FG), 493–494 (FG), 496–497 (FG), 516–517 (FG), 527–528 (FG), 546–547 (FG), 553–554 (FG), and 565–566 (FG). The segment at 2-566 (FGGAKPSFGA…GGSLGGGGFG (565 aa)) is 46 X 2 AA repeats of F-G. Disordered stretches follow at residues 698-768 (KSVE…WLHP) and 781-860 (TGMD…AANQ). Positions 704–718 (NPSSSIGSAPNTPQS) are enriched in polar residues. Residues 755–768 (ESQDNGRRESWLHP) are compositionally biased toward basic and acidic residues. Composition is skewed to polar residues over residues 781-794 (TGMDQGSPHNSTLN) and 806-850 (RPSS…SNRS). Residues 886–1028 (RVGYYTIPSL…GSWVFRVKHF (143 aa)) form the Peptidase S59 domain. Residue serine 1029 is the Nucleophile of the active site.

It belongs to the nucleoporin GLFG family. As to quaternary structure, part of the nuclear pore complex (NPC). Interacts with Rae1. Nuclear pore complex protein Nup98: Interacts with pzg and Chro. Interacts with MBD-R2; the interaction allows Nup98 recruitment to chromatin. Interacts with Trx. Interacts with Wds. Interacts with Mgtor and Cp190. Upon ecdysone stimulation, interacts with EcR, CTCF, su(Hw) and Trl. Isoform A and isoform C are autoproteolytically cleaved to yield Nup98 and Nup96 or Nup98 only, respectively. In terms of tissue distribution, expressed in brain.

It localises to the chromosome. The protein resides in the nucleus. It is found in the nucleoplasm. The protein localises to the nucleus membrane. Its subcellular location is the nuclear pore complex. Functionally, part of the nuclear pore complex (NPC). Required for MAD import as part of the Nup107-160 complex and required for nuclear export of Moe probably via its association with Rae1. Plays a role in nuclear mRNA export. Promotes cell antiviral response by up-regulating FoxK-dependent antiviral gene transcription. In germline stem cells, involved in their maintenance and division together with the TGF-Beta and EGFR signaling pathways. In larval lymph glands, has a role in the maintenance of hematopoiesis by regulating Pvr expression. Its function is as follows. Part of the nuclear pore complex (NPC). In the nucleoplasm, binds to transcriptionally active chromatin with a preference for regulatory regions; co-localizes with RNA polymerase II in a RNA-independent manner and before transition into transcription elongation. Plays a role in the transcriptional memory process by stabilizing enhancer-promoter loops and by mediating anchoring of chromatin to the nuclear pore complex region. During larval development, interacts with trx and MBD-R2 and regulates transcription of developmental genes including ecdysone-responsive genes such as Eip74 and E23. Part of the nuclear pore complex (NPC). The sequence is that of Nuclear pore complex protein Nup98-Nup96 from Drosophila melanogaster (Fruit fly).